A 213-amino-acid polypeptide reads, in one-letter code: Kynurenine formamidase (213 aa).

Trp-20 contributes to the substrate binding site. 3 residues coordinate Zn(2+): His-50, His-54, and Asp-56. Residue His-60 is the Proton donor/acceptor of the active site. Residues His-161 and Glu-173 each contribute to the Zn(2+) site.

This sequence belongs to the Cyclase 1 superfamily. KynB family. As to quaternary structure, homodimer. The cofactor is Zn(2+).

It carries out the reaction N-formyl-L-kynurenine + H2O = L-kynurenine + formate + H(+). It functions in the pathway amino-acid degradation; L-tryptophan degradation via kynurenine pathway; L-kynurenine from L-tryptophan: step 2/2. Catalyzes the hydrolysis of N-formyl-L-kynurenine to L-kynurenine, the second step in the kynurenine pathway of tryptophan degradation. The polypeptide is Kynurenine formamidase (Pseudomonas aeruginosa (strain UCBPP-PA14)).